Consider the following 281-residue polypeptide: Elongation factor Ts (281 aa).

The involved in Mg(2+) ion dislocation from EF-Tu stretch occupies residues 86–89; sequence TDFV.

Belongs to the EF-Ts family.

It localises to the cytoplasm. Functionally, associates with the EF-Tu.GDP complex and induces the exchange of GDP to GTP. It remains bound to the aminoacyl-tRNA.EF-Tu.GTP complex up to the GTP hydrolysis stage on the ribosome. This Beutenbergia cavernae (strain ATCC BAA-8 / DSM 12333 / CCUG 43141 / JCM 11478 / NBRC 16432 / NCIMB 13614 / HKI 0122) protein is Elongation factor Ts.